A 171-amino-acid polypeptide reads, in one-letter code: 3-hydroxydecanoyl-[acyl-carrier-protein] dehydratase (171 aa).

The active site involves H70.

It belongs to the thioester dehydratase family. FabA subfamily. Homodimer.

Its subcellular location is the cytoplasm. It catalyses the reaction a (3R)-hydroxyacyl-[ACP] = a (2E)-enoyl-[ACP] + H2O. It carries out the reaction (3R)-hydroxydecanoyl-[ACP] = (2E)-decenoyl-[ACP] + H2O. The enzyme catalyses (2E)-decenoyl-[ACP] = (3Z)-decenoyl-[ACP]. The protein operates within lipid metabolism; fatty acid biosynthesis. In terms of biological role, necessary for the introduction of cis unsaturation into fatty acids. Catalyzes the dehydration of (3R)-3-hydroxydecanoyl-ACP to E-(2)-decenoyl-ACP and then its isomerization to Z-(3)-decenoyl-ACP. Can catalyze the dehydratase reaction for beta-hydroxyacyl-ACPs with saturated chain lengths up to 16:0, being most active on intermediate chain length. The protein is 3-hydroxydecanoyl-[acyl-carrier-protein] dehydratase of Pseudomonas putida (strain GB-1).